The sequence spans 337 residues: tRNA N6-adenosine threonylcarbamoyltransferase (337 aa).

2 residues coordinate Fe cation: H110 and H114. Residues 132-136, D165, G178, D182, and N268 contribute to the substrate site; that span reads VVSGG. D293 is a binding site for Fe cation.

The protein belongs to the KAE1 / TsaD family. The cofactor is Fe(2+).

Its subcellular location is the cytoplasm. The catalysed reaction is L-threonylcarbamoyladenylate + adenosine(37) in tRNA = N(6)-L-threonylcarbamoyladenosine(37) in tRNA + AMP + H(+). Its function is as follows. Required for the formation of a threonylcarbamoyl group on adenosine at position 37 (t(6)A37) in tRNAs that read codons beginning with adenine. Is involved in the transfer of the threonylcarbamoyl moiety of threonylcarbamoyl-AMP (TC-AMP) to the N6 group of A37, together with TsaE and TsaB. TsaD likely plays a direct catalytic role in this reaction. The polypeptide is tRNA N6-adenosine threonylcarbamoyltransferase (Sulfurihydrogenibium sp. (strain YO3AOP1)).